Here is an 861-residue protein sequence, read N- to C-terminus: Piwi-like protein 1 (861 aa).

The segment covering 1–13 (MTGRARARARGRA) has biased composition (basic residues). Positions 1–64 (MTGRARARAR…TAGGTAKSQG (64 aa)) are disordered. R14 carries the omega-N-methylarginine; by PRMT5; alternate modification. R14 is subject to Symmetric dimethylarginine; by PRMT5; alternate. Positions 17-27 (ETAQLVGSTAS) are enriched in polar residues. The residue at position 49 (R49) is an Omega-N-methylarginine; by PRMT5. An Omega-N-methylarginine; alternate modification is found at R53. R53 carries the post-translational modification Symmetric dimethylarginine; alternate. A D-box motif is present at residues 217-224 (RRLLKIMN). Positions 278–391 (TVLDFMFNFY…LIPELCYLTG (114 aa)) constitute a PAZ domain. Residues 316-318 (TYR) are required for binding 2'-O-methylated 3'-end of piRNAs. Position 370 is an omega-N-methylarginine; by PRMT5 (R370). The MID region stretch occupies residues 479–615 (SKETRGAPLI…LQMNCKMGGE (137 aa)). The 293-residue stretch at 555-847 (IVVCLLSSNR…LAFLVGQSIH (293 aa)) folds into the Piwi domain. Residues D632, E670, D702, and H836 contribute to the active site.

The protein belongs to the argonaute family. Piwi subfamily. In terms of assembly, interacts (via Piwi domain) with DICER1, suggesting that it forms ribonucleoprotein RISC complexes; this interaction is regulated by HSP90AB1 activity. Interacts with MAEL, KIF17, PABPC1, PRMT5 and WDR77. Interacts (when methylated on arginine residues) with TDRD1, TDRKH/TDRD2, RNF17/TDRD4, TDRD6, TDRD7 and TDRD9. Interacts with CLOCK. Interacts with MOV10L1. Interacts with ANAPC10; interaction oly takes place following piRNA-binding. Interacts with RNF8; leading to sequester RNF8 in the cytoplasm. Interacts with TEX19. Mg(2+) serves as cofactor. Post-translationally, arginine methylation by PRMT5 is required for the interaction with Tudor domain-containing protein (TDRD1, TDRKH/TDRD2, RNF17/TDRD4, TDRD6, TDRD7 and TDRD9) and subsequent localization to the meiotic nuage, also named P granule. In terms of processing, ubiquitinated by the anaphase promoting complex/cyclosome (APC/C) in late spermatids, leading to its degradation. Ubiquitination only takes place following piRNA-binding in adult testis. Ubiquitination and degradation in late spermatogenesis by APC/C is probably required to release RNF8 from the cytoplasm and promote histone to protamine exchange by RNF8. In terms of tissue distribution, expressed in spermatocytes and spermatids. Also detected in prostate cancer (at protein level). Detected in most fetal and adult tissues. Expressed in testes, specifically in germline cells; detected in spermatocytes and spermatids during spermatogenesis. Increased expression in testicular tumors originating from embryonic germ cells with retention of germ cells phenotype. No expression in testicular tumors of somatic origin, such as Sertoli cell and Leydig cell tumors. Overexpressed in gastric cancer cells. Isoform 3: Ubiquitously expressed, and specifically in CD34(+) hematopoietic progenitor cells but not in more differentiated cells.

The protein localises to the cytoplasm. Endoribonuclease that plays a central role in postnatal germ cells by repressing transposable elements and preventing their mobilization, which is essential for the germline integrity. Acts via the piRNA metabolic process, which mediates the repression of transposable elements during meiosis by forming complexes composed of piRNAs and Piwi proteins and governs the methylation and subsequent repression of transposons. Directly binds methylated piRNAs, a class of 24 to 30 nucleotide RNAs that are generated by a Dicer-independent mechanism and are primarily derived from transposons and other repeated sequence elements. Strongly prefers a uridine in the first position of their guide (g1U preference, also named 1U-bias). Not involved in the piRNA amplification loop, also named ping-pong amplification cycle. Acts as an endoribonuclease that cleaves transposon messenger RNAs. Besides their function in transposable elements repression, piRNAs are probably involved in other processes during meiosis such as translation regulation. Probable component of some RISC complex, which mediates RNA cleavage and translational silencing. Also plays a role in the formation of chromatoid bodies and is required for some miRNAs stability. Required to sequester RNF8 in the cytoplasm until late spermatogenesis; RNF8 being released upon ubiquitination and degradation of PIWIL1. Its function is as follows. May be a negative developmental regulator. This chain is Piwi-like protein 1 (PIWIL1), found in Homo sapiens (Human).